Reading from the N-terminus, the 309-residue chain is Cytidine deaminase (309 aa).

CMP/dCMP-type deaminase domains are found at residues 48-168 (DEDA…FGPR) and 200-309 (DDND…SLSL). A substrate-binding site is contributed by 89-91 (NME). Position 102 (His-102) interacts with Zn(2+). Residue Glu-104 is the Proton donor of the active site. 2 residues coordinate Zn(2+): Cys-129 and Cys-132.

This sequence belongs to the cytidine and deoxycytidylate deaminase family. In terms of assembly, homodimer. Zn(2+) serves as cofactor.

The enzyme catalyses cytidine + H2O + H(+) = uridine + NH4(+). It carries out the reaction 2'-deoxycytidine + H2O + H(+) = 2'-deoxyuridine + NH4(+). In terms of biological role, this enzyme scavenges exogenous and endogenous cytidine and 2'-deoxycytidine for UMP synthesis. This Sodalis glossinidius (strain morsitans) protein is Cytidine deaminase.